Consider the following 60-residue polypeptide: Large ribosomal subunit protein uL30 (60 aa).

The protein belongs to the universal ribosomal protein uL30 family. As to quaternary structure, part of the 50S ribosomal subunit.

The polypeptide is Large ribosomal subunit protein uL30 (Flavobacterium psychrophilum (strain ATCC 49511 / DSM 21280 / CIP 103535 / JIP02/86)).